Reading from the N-terminus, the 387-residue chain is Alanine racemase (387 aa).

K38 (proton acceptor; specific for D-alanine) is an active-site residue. The residue at position 38 (K38) is an N6-(pyridoxal phosphate)lysine. A substrate-binding site is contributed by R136. Y267 (proton acceptor; specific for L-alanine) is an active-site residue. M316 contributes to the substrate binding site.

Belongs to the alanine racemase family. Requires pyridoxal 5'-phosphate as cofactor.

It catalyses the reaction L-alanine = D-alanine. It functions in the pathway amino-acid biosynthesis; D-alanine biosynthesis; D-alanine from L-alanine: step 1/1. Catalyzes the interconversion of L-alanine and D-alanine. May also act on other amino acids. The protein is Alanine racemase (alr) of Clostridium tetani (strain Massachusetts / E88).